The primary structure comprises 191 residues: MAALHTLWMGLVLLGVLGVLQTRAQAQVSRQPNFQQDKFLGRWFTSGLASNSSWFREKKNALSMCISVVAPSAEGGLNLTTTFLRKDQCETRTLLLRPAETPGCYSYTSPHWGSTHDVWVVATDYEEYALLYTAGTKSPGQDFHMATLYSRTQTPRAEVKEKFSTFAKTRGFTEDAIVFLPKTERCMEEHR.

The signal sequence occupies residues 1-24 (MAALHTLWMGLVLLGVLGVLQTRA). The residue at position 25 (Gln25) is a Pyrrolidone carboxylic acid. A glycan (N-linked (GlcNAc...) asparagine) is linked at Asn51. Residue Cys65 is the Nucleophile of the active site. A glycan (N-linked (GlcNAc...) asparagine) is linked at Asn78. Cys89 and Cys186 are joined by a disulfide.

It belongs to the calycin superfamily. Lipocalin family. In terms of assembly, monomer. In terms of processing, N- and O-glycosylated. Both N-glycosylation recognition sites are almost quantitatively occupied by N-glycans of the biantennary complex type, with a considerable proportion of structures bearing a bisecting GlcNAc. N-glycan at Asn-78: dHex1Hex5HexNAc4. Agalacto structure as well as sialylated and nonsialylated oligosaccharides bearing alpha2-3- and/or alpha2-6-linked NeuNAc are present.

The protein resides in the rough endoplasmic reticulum. The protein localises to the nucleus membrane. It localises to the golgi apparatus. Its subcellular location is the cytoplasm. It is found in the perinuclear region. The protein resides in the secreted. It carries out the reaction prostaglandin H2 = prostaglandin D2. Functionally, catalyzes the conversion of PGH2 to PGD2, a prostaglandin involved in smooth muscle contraction/relaxation and a potent inhibitor of platelet aggregation. Involved in a variety of CNS functions, such as sedation, NREM sleep and PGE2-induced allodynia, and may have an anti-apoptotic role in oligodendrocytes. Binds small non-substrate lipophilic molecules, including biliverdin, bilirubin, retinal, retinoic acid and thyroid hormone, and may act as a scavenger for harmful hydrophobic molecules and as a secretory retinoid and thyroid hormone transporter. Possibly involved in development and maintenance of the blood-brain, blood-retina, blood-aqueous humor and blood-testis barrier. It is likely to play important roles in both maturation and maintenance of the central nervous system and male reproductive system. Involved in PLA2G3-dependent maturation of mast cells. PLA2G3 is secreted by immature mast cells and acts on nearby fibroblasts upstream to PTDGS to synthesize PGD2, which in turn promotes mast cell maturation and degranulation via PTGDR. The chain is Prostaglandin-H2 D-isomerase (PTGDS) from Felis catus (Cat).